The following is a 111-amino-acid chain: WAP four-disulfide core domain protein 12 (111 aa).

The first 23 residues, 1 to 23 (MGSSSFLVLMVSLALVTLVAAEG), serve as a signal peptide directing secretion. Positions 27 to 74 (GIEKAGVCPADNIRCFKSDPPQCHTDQDCLGERKCCYLHCGFKCVIPV) constitute a WAP domain. Cystine bridges form between Cys34–Cys62, Cys41–Cys66, Cys49–Cys61, and Cys55–Cys70. The interval 80-111 (GGNKDEDVSGPCPEPGWEAKSPGSSSTGCPQK) is disordered. A compositionally biased stretch (polar residues) spans 101–111 (PGSSSTGCPQK).

The protein resides in the secreted. In terms of biological role, antibacterial protein. Putative acid-stable proteinase inhibitor. The polypeptide is WAP four-disulfide core domain protein 12 (WFDC12) (Macaca mulatta (Rhesus macaque)).